Consider the following 479-residue polypeptide: Adenosylhomocysteinase (479 aa).

Substrate is bound by residues Thr-66, Asp-142, and Glu-203. NAD(+) is bound at residue 204 to 206 (TTT). Substrate-binding residues include Lys-233 and Asp-237. Residues Asn-238, 267–272 (GYGDVG), Glu-290, Asn-325, 346–348 (IGH), and Asn-394 each bind NAD(+).

Belongs to the adenosylhomocysteinase family. NAD(+) is required as a cofactor.

The protein resides in the cytoplasm. The catalysed reaction is S-adenosyl-L-homocysteine + H2O = L-homocysteine + adenosine. Its pathway is amino-acid biosynthesis; L-homocysteine biosynthesis; L-homocysteine from S-adenosyl-L-homocysteine: step 1/1. Its function is as follows. May play a key role in the regulation of the intracellular concentration of adenosylhomocysteine. The polypeptide is Adenosylhomocysteinase (Nitratidesulfovibrio vulgaris (strain DSM 19637 / Miyazaki F) (Desulfovibrio vulgaris)).